Here is a 159-residue protein sequence, read N- to C-terminus: Probable carbonic anhydrase (159 aa).

Substrate contacts are provided by residues 33 to 35 (RGD) and 48 to 49 (QD). The Zn(2+) site is built by His-54, His-71, and His-76.

It belongs to the gamma-class carbonic anhydrase family. Zn(2+) serves as cofactor.

It catalyses the reaction hydrogencarbonate + H(+) = CO2 + H2O. Functionally, probably reversibly hydrates carbon dioxide. The protein is Probable carbonic anhydrase of Methanocaldococcus jannaschii (strain ATCC 43067 / DSM 2661 / JAL-1 / JCM 10045 / NBRC 100440) (Methanococcus jannaschii).